The following is a 98-amino-acid chain: Small ribosomal subunit protein bS20 (98 aa).

Basic residues predominate over residues M1–P12. Positions M1–K20 are disordered.

This sequence belongs to the bacterial ribosomal protein bS20 family.

Functionally, binds directly to 16S ribosomal RNA. The chain is Small ribosomal subunit protein bS20 from Chlamydia caviae (strain ATCC VR-813 / DSM 19441 / 03DC25 / GPIC) (Chlamydophila caviae).